Consider the following 694-residue polypeptide: Phosphatase and actin regulator 4-A (694 aa).

Composition is skewed to basic and acidic residues over residues 1-13 (MEDR…DHSE) and 46-72 (SSDS…ELIK). Disordered regions lie at residues 1–29 (MEDR…KSKF), 42–169 (RKRK…QPLP), 192–403 (VNEV…HIRI), 426–445 (LFMQ…RSLP), and 450–572 (LLKV…QIRQ). Residues 55–80 (EVLERKISTRKPREELIKRGLLVEVP) form an RPEL 1 repeat. The segment covering 240-267 (SISTSVTQESAVAGQKSDSSNRLQSSAP) has biased composition (polar residues). A compositionally biased stretch (low complexity) spans 300-317 (AELSLALAGSPLSPAGSR). Composition is skewed to pro residues over residues 318 to 327 (PSPPLPPKRA) and 372 to 381 (SNPPVPPLTL). Composition is skewed to acidic residues over residues 455–467 (DDED…DESL), 499–511 (QEEE…DTDS), and 519–529 (DDEEEEEEEET). RPEL repeat units lie at residues 576 to 601 (TQLN…QKNE) and 613 to 638 (RRLT…RFNE).

This sequence belongs to the phosphatase and actin regulator family. Binds ppp1ca and actin.

The protein localises to the cytoplasm. Its subcellular location is the cell projection. It is found in the lamellipodium. Regulator of protein phosphatase 1 (PP1) required for neural tube and optic fissure closure, and enteric neural crest cell (ENCCs) migration during development. Acts as an activator of PP1. During neural tube closure, localizes to the ventral neural tube and activates PP1, leading to down-regulate cell proliferation within cranial neural tissue and the neural retina. Also acts as a regulator of migration of enteric neural crest cells (ENCCs) by activating PP1, leading to repression of the integrin signaling through the rho/rock pathway. This Xenopus laevis (African clawed frog) protein is Phosphatase and actin regulator 4-A (phactr4-a).